Consider the following 217-residue polypeptide: Peroxiredoxin (217 aa).

Residues 2–159 (VVIGEKFPEV…IVRLVKALQT (158 aa)) enclose the Thioredoxin domain. The active-site Cysteine sulfenic acid (-SOH) intermediate is the C46. R122 contacts substrate.

The protein belongs to the peroxiredoxin family. Prx6 subfamily. In terms of assembly, homodecamer. Pentamer of dimers that assemble into a ring structure.

The protein localises to the cytoplasm. The catalysed reaction is a hydroperoxide + [thioredoxin]-dithiol = an alcohol + [thioredoxin]-disulfide + H2O. In terms of biological role, thiol-specific peroxidase that catalyzes the reduction of hydrogen peroxide and organic hydroperoxides to water and alcohols, respectively. Plays a role in cell protection against oxidative stress by detoxifying peroxides. The sequence is that of Peroxiredoxin from Methanococcus maripaludis (strain DSM 14266 / JCM 13030 / NBRC 101832 / S2 / LL).